A 92-amino-acid polypeptide reads, in one-letter code: Small ribosomal subunit protein uS19 (92 aa).

The protein belongs to the universal ribosomal protein uS19 family.

In terms of biological role, protein S19 forms a complex with S13 that binds strongly to the 16S ribosomal RNA. The polypeptide is Small ribosomal subunit protein uS19 (Granulibacter bethesdensis (strain ATCC BAA-1260 / CGDNIH1)).